The chain runs to 598 residues: Elongation factor 4 (598 aa).

In terms of domain architecture, tr-type G spans 2-184; the sequence is KNIRNFSIIA…EIVRKIPAPE (183 aa). GTP contacts are provided by residues 14 to 19 and 131 to 134; these read DHGKST and NKID.

This sequence belongs to the TRAFAC class translation factor GTPase superfamily. Classic translation factor GTPase family. LepA subfamily.

It localises to the cell inner membrane. The catalysed reaction is GTP + H2O = GDP + phosphate + H(+). In terms of biological role, required for accurate and efficient protein synthesis under certain stress conditions. May act as a fidelity factor of the translation reaction, by catalyzing a one-codon backward translocation of tRNAs on improperly translocated ribosomes. Back-translocation proceeds from a post-translocation (POST) complex to a pre-translocation (PRE) complex, thus giving elongation factor G a second chance to translocate the tRNAs correctly. Binds to ribosomes in a GTP-dependent manner. This chain is Elongation factor 4, found in Histophilus somni (strain 2336) (Haemophilus somnus).